The following is a 336-amino-acid chain: Aldo-keto reductase str7 (336 aa).

Residue Asp57 coordinates NADP(+). The active-site Proton donor is the Tyr62. His124 lines the substrate pocket. Residues 154 to 155, Gln174, 206 to 220, and 283 to 291 contribute to the NADP(+) site; these read SE, SPLG…YKSP, and KKIKYLEEN.

The protein belongs to the aldo/keto reductase family. Aldo/keto reductase 2 subfamily.

It functions in the pathway mycotoxin biosynthesis. Aldo-keto reductase; part of the gene cluster that mediates the biosynthesis of strobilurin A, an antifungal polyketide that contains a key beta-methoxyacrylate toxophore that targets the complex III of the mitochondrial electron transport chain. Strobilurin biosynthesis begins with construction of benzoyl CoA by step-wise elimination of ammonia from phenylalanine by the phenylalanine ammonia-lyase str11, oxygenation by str8 and retro-Claisen reaction to form benzoic acid, which is activated to its CoA thiolester benzoyl CoA by the dedicated CoA ligase str10. Benzoyl CoA forms the starter unit for the highly reducing polyketide synthase stpks1 that produces the polyketide prestrobilutin A. The FAD-dependent oxygenase str9 then catalyzes the key oxidative rearrangement responsible for the creation of the beta-methoxyacrylate toxophore. Str9 performs epoxidation of the 2,3 olefin of prestrobilutin A, followed by Meinwald rearrangement to furnish the aldehyde intermediate. Rapid enolization of the aldehyde intermediate would give the beta-methoxyacrylate skeleton and methylations catalyzed by str2 and str3 complete the synthesis and lead to the production of strobilurin A. The short-chain dehydrogenase stl2 and the dehydrogenase str4 play a role in the shunt pathway leading to the production of bolineol. The cluster encodes no obvious halogenase gene that could be involved in production of strobilurin B, nor any obvious dimethylallyl-transferase that could be involved in the production of strobilurin G. It is possible that unknown proteins encoded in, or near, the cluster (such as str1 or stl1) may form new classes of halogenases or dimethylally-transferases, or that the responsible genes are located elsewhere on the genome. Similarly, proteins encoded by str5/str6 hydrolases appear to have no chemical role in the biosynthesis of strobilurin A. Finally, no obvious self-resistance gene is found within the cluster. The chain is Aldo-keto reductase str7 from Strobilurus tenacellus.